The primary structure comprises 390 residues: UPF0229 protein OB2647 (390 aa).

The tract at residues 99 to 121 (NASQQGQQGQGNGKKAGDQPGTD) is disordered.

It belongs to the UPF0229 family.

This chain is UPF0229 protein OB2647, found in Oceanobacillus iheyensis (strain DSM 14371 / CIP 107618 / JCM 11309 / KCTC 3954 / HTE831).